The sequence spans 449 residues: Elongation factor 1-alpha (449 aa).

Positions 5–230 constitute a tr-type G domain; the sequence is KVHINIVVIG…DQIQEPKRPS (226 aa). The G1 stretch occupies residues 14-21; that stretch reads GHVDSGKS. A GTP-binding site is contributed by 14–21; it reads GHVDSGKS. Position 55 is an N6,N6-dimethyllysine (K55). Positions 70-74 are G2; the sequence is GITID. Residue K79 is modified to N6,N6,N6-trimethyllysine. The interval 91-94 is G3; that stretch reads DAPG. Residues 91–95 and 153–156 each bind GTP; these read DAPGH and NKMD. The segment at 153 to 156 is G4; that stretch reads NKMD. The residue at position 187 (K187) is an N6,N6,N6-trimethyllysine. The G5 stretch occupies residues 194 to 196; the sequence is SGF. An N6-methyllysine modification is found at K261. 5-glutamyl glycerylphosphorylethanolamine is present on E289. K306 carries the N6,N6,N6-trimethyllysine modification. The residue at position 362 (E362) is a 5-glutamyl glycerylphosphorylethanolamine. K396 bears the N6,N6,N6-trimethyllysine mark.

It belongs to the TRAFAC class translation factor GTPase superfamily. Classic translation factor GTPase family. EF-Tu/EF-1A subfamily.

It is found in the cytoplasm. In terms of biological role, this protein promotes the GTP-dependent binding of aminoacyl-tRNA to the A-site of ribosomes during protein biosynthesis. The sequence is that of Elongation factor 1-alpha (EF1) from Manihot esculenta (Cassava).